A 235-amino-acid chain; its full sequence is Phosphoribosylaminoimidazole-succinocarboxamide synthase (235 aa).

The protein belongs to the SAICAR synthetase family.

The enzyme catalyses 5-amino-1-(5-phospho-D-ribosyl)imidazole-4-carboxylate + L-aspartate + ATP = (2S)-2-[5-amino-1-(5-phospho-beta-D-ribosyl)imidazole-4-carboxamido]succinate + ADP + phosphate + 2 H(+). It participates in purine metabolism; IMP biosynthesis via de novo pathway; 5-amino-1-(5-phospho-D-ribosyl)imidazole-4-carboxamide from 5-amino-1-(5-phospho-D-ribosyl)imidazole-4-carboxylate: step 1/2. This is Phosphoribosylaminoimidazole-succinocarboxamide synthase from Streptococcus pneumoniae (strain ATCC 700669 / Spain 23F-1).